We begin with the raw amino-acid sequence, 218 residues long: Ribonuclease HII (218 aa).

Residues 22–211 (VRIAGVDEAG…VRAALESRFS (190 aa)) form the RNase H type-2 domain. Residues aspartate 28, glutamate 29, and aspartate 119 each coordinate a divalent metal cation.

It belongs to the RNase HII family. Requires Mn(2+) as cofactor. Mg(2+) serves as cofactor.

It localises to the cytoplasm. The catalysed reaction is Endonucleolytic cleavage to 5'-phosphomonoester.. Its function is as follows. Endonuclease that specifically degrades the RNA of RNA-DNA hybrids. This is Ribonuclease HII from Maricaulis maris (strain MCS10) (Caulobacter maris).